The following is a 322-amino-acid chain: Deoxycytidylate deaminase (322 aa).

A CMP/dCMP-type deaminase domain is found at Ser173 to Leu311. His246 contributes to the Zn(2+) binding site. Glu248 serves as the catalytic Proton donor. Zn(2+) is bound by residues Cys273 and Cys276.

This sequence belongs to the cytidine and deoxycytidylate deaminase family. Zn(2+) is required as a cofactor.

It localises to the cytoplasm. The protein resides in the nucleus. It catalyses the reaction dCMP + H2O + H(+) = dUMP + NH4(+). Supplies the nucleotide substrate for thymidylate synthetase. The chain is Deoxycytidylate deaminase from Schizosaccharomyces pombe (strain 972 / ATCC 24843) (Fission yeast).